Here is a 249-residue protein sequence, read N- to C-terminus: Pyridoxine 5'-phosphate synthase (249 aa).

Residue Asn7 coordinates 3-amino-2-oxopropyl phosphate. 9 to 10 (DH) serves as a coordination point for 1-deoxy-D-xylulose 5-phosphate. Arg18 contacts 3-amino-2-oxopropyl phosphate. His43 (proton acceptor) is an active-site residue. 1-deoxy-D-xylulose 5-phosphate-binding residues include Arg45 and His50. The active-site Proton acceptor is the Glu70. Thr100 contacts 1-deoxy-D-xylulose 5-phosphate. The active-site Proton donor is His198. Residues Ala199 and 220 to 221 (GH) each bind 3-amino-2-oxopropyl phosphate.

Belongs to the PNP synthase family. As to quaternary structure, homooctamer; tetramer of dimers.

It is found in the cytoplasm. The catalysed reaction is 3-amino-2-oxopropyl phosphate + 1-deoxy-D-xylulose 5-phosphate = pyridoxine 5'-phosphate + phosphate + 2 H2O + H(+). It functions in the pathway cofactor biosynthesis; pyridoxine 5'-phosphate biosynthesis; pyridoxine 5'-phosphate from D-erythrose 4-phosphate: step 5/5. Functionally, catalyzes the complicated ring closure reaction between the two acyclic compounds 1-deoxy-D-xylulose-5-phosphate (DXP) and 3-amino-2-oxopropyl phosphate (1-amino-acetone-3-phosphate or AAP) to form pyridoxine 5'-phosphate (PNP) and inorganic phosphate. In Azoarcus sp. (strain BH72), this protein is Pyridoxine 5'-phosphate synthase.